The sequence spans 159 residues: Small ribosomal subunit protein uS4 (159 aa).

The 53-residue stretch at Arg-106–Ile-158 folds into the S4 RNA-binding domain.

This sequence belongs to the universal ribosomal protein uS4 family. In terms of assembly, part of the 30S ribosomal subunit. Contacts protein S5. The interaction surface between S4 and S5 is involved in control of translational fidelity.

Functionally, one of the primary rRNA binding proteins, it binds directly to 16S rRNA where it nucleates assembly of the body of the 30S subunit. With S5 and S12 plays an important role in translational accuracy. The protein is Small ribosomal subunit protein uS4 of Pyrobaculum islandicum (strain DSM 4184 / JCM 9189 / GEO3).